A 1379-amino-acid chain; its full sequence is DNA-directed RNA polymerase subunit beta (1379 aa).

The protein belongs to the RNA polymerase beta chain family. In terms of assembly, in plastids the minimal PEP RNA polymerase catalytic core is composed of four subunits: alpha, beta, beta', and beta''. When a (nuclear-encoded) sigma factor is associated with the core the holoenzyme is formed, which can initiate transcription.

Its subcellular location is the plastid. It is found in the chloroplast. The catalysed reaction is RNA(n) + a ribonucleoside 5'-triphosphate = RNA(n+1) + diphosphate. Functionally, DNA-dependent RNA polymerase catalyzes the transcription of DNA into RNA using the four ribonucleoside triphosphates as substrates. This Trieres chinensis (Marine centric diatom) protein is DNA-directed RNA polymerase subunit beta.